A 311-amino-acid polypeptide reads, in one-letter code: Manganese-dependent ADP-ribose/CDP-alcohol diphosphatase (311 aa).

The Zn(2+) site is built by Asp17, Gln19, Asp64, Asn99, His218, His255, and His257.

Belongs to the ADPRibase-Mn family. Monomer. The cofactor is Mg(2+).

It catalyses the reaction CDP-choline + H2O = phosphocholine + CMP + 2 H(+). The enzyme catalyses ADP-D-ribose + H2O = D-ribose 5-phosphate + AMP + 2 H(+). The catalysed reaction is CDP-glycerol + H2O = sn-glycerol 3-phosphate + CMP + 2 H(+). Hydrolyzes ADP-ribose, IDP-ribose, CDP-glycerol, CDP-choline and CDP-ethanolamine, but not other non-reducing ADP-sugars or CDP-glucose. This chain is Manganese-dependent ADP-ribose/CDP-alcohol diphosphatase, found in Arabidopsis thaliana (Mouse-ear cress).